Reading from the N-terminus, the 203-residue chain is Chaperonin-like RbcX protein 2, chloroplastic (203 aa).

The N-terminal 78 residues, 1-78, are a transit peptide targeting the chloroplast; that stretch reads MVSAWFVVGS…RKSKKLLIVN (78 aa).

Belongs to the RbcX family. In terms of assembly, homodimer. Interacts with rbcL, atpB and RBCS-1B.

The protein localises to the plastid. Its subcellular location is the chloroplast stroma. Functionally, chaperone involved in RuBisCO assembly process. This is Chaperonin-like RbcX protein 2, chloroplastic from Arabidopsis thaliana (Mouse-ear cress).